Reading from the N-terminus, the 97-residue chain is uncharacterized protein (97 aa).

Residues 72–97 are disordered; sequence TVERKRSEHTNSRKKDPSAYTWSDVK. The span at 73–88 shows a compositional bias: basic and acidic residues; sequence VERKRSEHTNSRKKDP.

It belongs to the chlamydial CPn_0121/CT_031/TC_0300 family.

This is an uncharacterized protein from Chlamydia pneumoniae (Chlamydophila pneumoniae).